The following is a 621-amino-acid chain: Polycystin-2-like protein 2 (621 aa).

Residues 1–31 (MSEATWWYRGGTSKHDLHYRREAEVNTTLEE) are Cytoplasmic-facing. The helical transmembrane segment at 32-52 (LLLYFIFLINLCILTFGMVNP) threads the bilayer. Residues 53 to 277 (HMYYLNKVMS…SVKLLRYVSY (225 aa)) are Extracellular-facing. N-linked (GlcNAc...) asparagine glycosylation is found at Asn-115 and Asn-138. A helical transmembrane segment spans residues 278–298 (YDYFIASCEVIFCIFLFVFII). Residues 299-314 (QELRKVNEFKSAYFRS) lie on the Cytoplasmic side of the membrane. The helical transmembrane segment at 315–335 (VWNWLEMLLLLLCFLAVSFYA) threads the bilayer. Residues 336-360 (YCNMQSFLLLGQLLKNTDSYPDFYF) are Extracellular-facing. The chain crosses the membrane as a helical span at residues 361-381 (LAYWHIYYNNVIAITIFFAWI). At 382-406 (KIFKFISFNETMSQLSSTLSRCMKD) the chain is on the cytoplasmic side. Residues 407–427 (IVGFAIMFFIIFSAYAQLGFL) traverse the membrane as a helical segment. Residues 428-468 (VFGSQVDDFSTFQNSIFAQFRIVLGDFNFAGIQQANWILGP) are Extracellular-facing. Residues 469-489 (IYFITFIFFVFFVLLNMFLAI) traverse the membrane as a helical segment. At 490 to 621 (INDTYSEVKA…KLNQLMRKLH (132 aa)) the chain is on the cytoplasmic side. Residues 521-551 (NVLEKLRLKKAQAKEEKKMQTTDLAQRARRD) are a coiled coil.

This sequence belongs to the polycystin family. As to quaternary structure, interacts with TRPC1 and TRPC5. Expressed only in testis and heart.

The protein resides in the membrane. Exhibits a lower single conductance but no spontaneous channel activity. May function as a regulator of calcium channels or a channel component involving Ca2(+) homeostasis. The protein is Polycystin-2-like protein 2 of Mus musculus (Mouse).